The chain runs to 134 residues: Ribonuclease VapC (134 aa).

Residues I4–E124 enclose the PINc domain. Mg(2+) is bound at residue D6.

This sequence belongs to the PINc/VapC protein family. Mg(2+) serves as cofactor.

Toxic component of a type II toxin-antitoxin (TA) system. Has ssRNase activity. Its RNase activity is partially neutralized by cognate antitoxin VapB. Rapidly induces apoptosis upon microinjection into mouse fibroblasts (L929 line). Probably contributes to host cell death if bacterial cell lysis occurs during host infection. This is Ribonuclease VapC from Rickettsia bellii (strain RML369-C).